We begin with the raw amino-acid sequence, 517 residues long: MEVNEGQDTEGGSSRAQTLTPPPNPQQQLYDEEDLLRESMDTTEKTFENGFQIQKEQIRQHLQDSSQRGTAEDAETQKMKQFLDTNELHNMASDSWAMMREEIMEKRETNRDLNRQLKEKSEELMQKSQILVETTLKLKAVEEERDKRKKEEQFREADARSNNYARKDHGYKMHNIELKNEYTSTTYRCRYICRCALKPCMFNMTLVPEAHTPSPTQLYRMYCIMEKSGNRKIDPKQLMAMSSRPLPSPLQITLPDKMMDNLFKDMIGCSSLWTYVAELGWENSYNRYVDKLLNENCGDILNGPGTMLILADGLRLEDLPVSTKNCFVCTDYDEETLIALQKKCCRERFKMIVLVIPFTIDVELVDCWNRLIAKISEETKILVVSNMTPDELEDHALLVEFTSILQKCRRVDDGYLEIISLHDRLEAHPRKTLEMTALAGKVEYWKAVQTRAKEVGMEWKAFELKRCTSDTPVKNSDCEASTSMKSASTVRTFEDRMVKRGNHNRVYHHFTPYGRKK.

Disordered stretches follow at residues 1 to 29 and 142 to 161; these read MEVN…QQQL and EEER…DARS.

In Caenorhabditis elegans, this protein is Retrotransposon-like protein 1 (retr-1).